Consider the following 188-residue polypeptide: MVSKKVYFLTSNPHKAKEVSDVLSQFSIEVVPLKGEKLEIQADSVEEVARFAAEEAKKRFKERPLLLEDSGLFVDALKGFPGPYSNYVYRTLGLEGLLKLMEGVEDRRARFVCAAALVKEDDKIVIEVGEVEGEIAYEPRGDKGFGFDPIFVPLGYEKTFAELGEEVKKRISHRARAFMKIAKHLSGE.

10–15 serves as a coordination point for substrate; the sequence is TSNPHK. Mg(2+) is bound by residues E39 and D69. D69 (proton acceptor) is an active-site residue. Residues S70, 145–148, K168, and 173–174 each bind substrate; these read FGFD and HR.

Belongs to the HAM1 NTPase family. In terms of assembly, homodimer. Mg(2+) serves as cofactor.

The catalysed reaction is XTP + H2O = XMP + diphosphate + H(+). The enzyme catalyses dITP + H2O = dIMP + diphosphate + H(+). It carries out the reaction ITP + H2O = IMP + diphosphate + H(+). Its function is as follows. Pyrophosphatase that catalyzes the hydrolysis of nucleoside triphosphates to their monophosphate derivatives, with a high preference for the non-canonical purine nucleotides XTP (xanthosine triphosphate), dITP (deoxyinosine triphosphate) and ITP. Seems to function as a house-cleaning enzyme that removes non-canonical purine nucleotides from the nucleotide pool, thus preventing their incorporation into DNA/RNA and avoiding chromosomal lesions. In Ignicoccus hospitalis (strain KIN4/I / DSM 18386 / JCM 14125), this protein is dITP/XTP pyrophosphatase.